Consider the following 80-residue polypeptide: uncharacterized protein (80 aa).

This is an uncharacterized protein from Enterobacteria phage T4 (Bacteriophage T4).